Consider the following 276-residue polypeptide: Molybdenum storage protein subunit alpha (276 aa).

In terms of assembly, octamer consisting of 4 alpha and 4 beta chains.

Its subcellular location is the cytoplasm. In terms of biological role, intracellular storage of molybdenum. Binds polyoxomolybdates. Can bind at least 90 molybdenum atoms per protein molecule. The protein is Molybdenum storage protein subunit alpha of Azotobacter vinelandii (strain DJ / ATCC BAA-1303).